A 63-amino-acid polypeptide reads, in one-letter code: Acrosin inhibitor 1 (63 aa).

Residues 8–63 (FGFPPDCKVYTEACTREYNPICDSAAKTYSNECTFCNEKMNNDADIHFNHFGECEY) enclose the Kazal-like domain. Intrachain disulfides connect Cys14-Cys43, Cys21-Cys40, and Cys29-Cys61.

Seminal plasma.

It is found in the secreted. Its function is as follows. Strong inhibitor of acrosin. The protein is Acrosin inhibitor 1 of Bos taurus (Bovine).